A 407-amino-acid chain; its full sequence is Succinate--CoA ligase [ADP-forming] subunit beta, hydrogenosomal (407 aa).

The transit peptide at 1-9 directs the protein to the hydrogenosome; it reads MLSSSFARN. An ATP-grasp domain is found at 18–261; the sequence is KEICAKYNVA…LKQVNPFEIR (244 aa). ATP-binding positions include lysine 55, 62–64, and glutamate 124; that span reads GRG. 2 residues coordinate Mg(2+): asparagine 216 and aspartate 230. Residues asparagine 281 and 338-340 contribute to the substrate site; that span reads GIV.

This sequence belongs to the succinate/malate CoA ligase beta subunit family. Heterodimer of an alpha and a beta subunit. Mg(2+) is required as a cofactor.

The protein resides in the hydrogenosome. It carries out the reaction succinate + ATP + CoA = succinyl-CoA + ADP + phosphate. It functions in the pathway carbohydrate metabolism; tricarboxylic acid cycle; succinate from succinyl-CoA (ligase route): step 1/1. In terms of biological role, succinyl-CoA synthetase functions in the citric acid cycle (TCA), coupling the hydrolysis of succinyl-CoA to the synthesis of ATP and thus represents the only step of substrate-level phosphorylation in the TCA. The beta subunit provides nucleotide specificity of the enzyme and binds the substrate succinate, while the binding sites for coenzyme A and phosphate are found in the alpha subunit. The polypeptide is Succinate--CoA ligase [ADP-forming] subunit beta, hydrogenosomal (Trichomonas vaginalis).